The sequence spans 210 residues: ER membrane protein complex subunit 8 (210 aa).

Positions 4–150 (VKLTTQAYCK…IHVYEHHENR (147 aa)) constitute an MPN domain.

It belongs to the EMC8/EMC9 family. As to quaternary structure, component of the ER membrane protein complex (EMC). EMC8 and EMC9 are mutually exclusive subunits of the EMC complex. In terms of tissue distribution, expressed in liver, pancreas, heart, lung, kidney, brain, skeletal muscle, and placenta. Expression levels are highest in pancreas and moderate in heart, skeletal muscle, and placenta.

The protein localises to the endoplasmic reticulum membrane. Functionally, part of the endoplasmic reticulum membrane protein complex (EMC) that enables the energy-independent insertion into endoplasmic reticulum membranes of newly synthesized membrane proteins. Preferentially accommodates proteins with transmembrane domains that are weakly hydrophobic or contain destabilizing features such as charged and aromatic residues. Involved in the cotranslational insertion of multi-pass membrane proteins in which stop-transfer membrane-anchor sequences become ER membrane spanning helices. It is also required for the post-translational insertion of tail-anchored/TA proteins in endoplasmic reticulum membranes. By mediating the proper cotranslational insertion of N-terminal transmembrane domains in an N-exo topology, with translocated N-terminus in the lumen of the ER, controls the topology of multi-pass membrane proteins like the G protein-coupled receptors. By regulating the insertion of various proteins in membranes, it is indirectly involved in many cellular processes. The sequence is that of ER membrane protein complex subunit 8 (EMC8) from Homo sapiens (Human).